A 311-amino-acid polypeptide reads, in one-letter code: Large ribosomal subunit protein uL22 (311 aa).

It belongs to the universal ribosomal protein uL22 family. Part of the 50S ribosomal subunit.

This protein binds specifically to 23S rRNA; its binding is stimulated by other ribosomal proteins, e.g. L4, L17, and L20. It is important during the early stages of 50S assembly. It makes multiple contacts with different domains of the 23S rRNA in the assembled 50S subunit and ribosome. Its function is as follows. The globular domain of the protein is located near the polypeptide exit tunnel on the outside of the subunit, while an extended beta-hairpin is found that lines the wall of the exit tunnel in the center of the 70S ribosome. The protein is Large ribosomal subunit protein uL22 (rplV) of Ureaplasma parvum serovar 3 (strain ATCC 27815 / 27 / NCTC 11736).